We begin with the raw amino-acid sequence, 939 residues long: Collagen-like protein 3 (939 aa).

N-linked (GlcNAc...) asparagine; by host glycosylation is found at asparagine 15, asparagine 35, asparagine 39, and asparagine 82. A compositionally biased stretch (low complexity) spans 84–95; sequence SGSSGPSGPQGP. 2 disordered regions span residues 84–332 and 358–697; these read SGSS…DLGN and SIKG…KGEA. Collagen-like domains are found at residues 88-147, 148-207, 211-330, 364-423, 427-486, 493-552, 564-622, and 638-697; these read GPSG…NGDK, GNKG…KGDK, GNKG…SPDL, GDKG…SGAD, GDKG…KGEK, GESG…KGSK, GDKG…KGDV, and GDKG…KGEA. Basic and acidic residues-rich tracts occupy residues 96–110, 123–182, 189–230, 237–260, 267–288, 297–314, 360–371, 378–416, 423–491, 498–527, 537–552, 560–580, and 589–684; these read KGEKGSNGDKGDKGE, DADK…DPGI, DADK…DIGL, DADKGDKGDKGSKGDKGDKGDIGP, DADKGDKGDKGSKGDKGDKGTK, KGDKGDKGDKGIKGDKGE, KGDKGDKGDTGL, DADKGEKGDPGNKGDKGNKGDKGSKGDKGDKGDKGDTGL, DADK…DVGI, DADKGDKGEKGDKGVNGDKGDKGSKGDTGI, KGDKGSKGDKGDKGSK, KGDKGDKGDKGSKGDKGDIGI, and KGDK…DKGD. Residues asparagine 788, asparagine 820, asparagine 858, asparagine 919, and asparagine 925 are each glycosylated (N-linked (GlcNAc...) asparagine; by host). Residues 896–923 form a disordered region; the sequence is NGETGAPTTDSGTNYGAGGGGGGNGTQG. The span at 910 to 923 shows a compositional bias: gly residues; the sequence is YGAGGGGGGNGTQG.

Post-translationally, may be hydroxylated on lysine by the viral-encoded procollagen-lysine,2-oxoglutarate 5-dioxygenase.

The protein localises to the virion. In terms of biological role, may participate in the formation of a layer of cross-linked glycosylated fibrils at the viral surface thus giving it a hairy-like appearance. The protein is Collagen-like protein 3 of Acanthamoeba polyphaga (Amoeba).